The chain runs to 148 residues: MELILLEKVANLGNLGDKVKVKAGYGRNFLLPFGKATVANAANLAAFEERRAELEKAAADKKSSAESRAAQLAELEVTITATAGDEGKLFGSIGTHDIADALTASGVEVAKAEVRLPNGTIRQVGEYDVAVHLHSDVEATVRVVVVAA.

The protein belongs to the bacterial ribosomal protein bL9 family.

Its function is as follows. Binds to the 23S rRNA. In Pseudomonas putida (strain GB-1), this protein is Large ribosomal subunit protein bL9.